We begin with the raw amino-acid sequence, 74 residues long: Conotoxin Bu4 (74 aa).

Positions 1 to 22 are cleaved as a signal peptide; sequence MKLTCVVIVAVLLLTACQLIIA. A propeptide spanning residues 23 to 45 is cleaved from the precursor; that stretch reads EDSRGTQLHRALRKATKLSVSTR. 3 disulfide bridges follow: Cys-47/Cys-63, Cys-54/Cys-66, and Cys-62/Cys-73.

Belongs to the conotoxin O1 superfamily. Expressed by the venom duct.

The protein localises to the secreted. This Conus bullatus (Bubble cone) protein is Conotoxin Bu4.